The primary structure comprises 127 residues: Large ribosomal subunit protein bL12 (127 aa).

This sequence belongs to the bacterial ribosomal protein bL12 family. In terms of assembly, homodimer. Part of the ribosomal stalk of the 50S ribosomal subunit. Forms a multimeric L10(L12)X complex, where L10 forms an elongated spine to which 2 to 4 L12 dimers bind in a sequential fashion. Binds GTP-bound translation factors.

Forms part of the ribosomal stalk which helps the ribosome interact with GTP-bound translation factors. Is thus essential for accurate translation. The protein is Large ribosomal subunit protein bL12 of Leptospira interrogans serogroup Icterohaemorrhagiae serovar copenhageni (strain Fiocruz L1-130).